We begin with the raw amino-acid sequence, 152 residues long: Histone H2B.1 (152 aa).

Residues 1-28 show a composition bias toward basic and acidic residues; the sequence is MAPKAEKKPAAKKPAEEEPAAEKAEKTP. Residues 1–60 form a disordered region; that stretch reads MAPKAEKKPAAKKPAEEEPAAEKAEKTPAGKKPKAEKRLPAGKSAAKEGGDKKGKKKAKK. 2 positions are modified to N6-acetyllysine: K7 and K37. Residue K148 forms a Glycyl lysine isopeptide (Lys-Gly) (interchain with G-Cter in ubiquitin) linkage.

The protein belongs to the histone H2B family. In terms of assembly, the nucleosome is a histone octamer containing two molecules each of H2A, H2B, H3 and H4 assembled in one H3-H4 heterotetramer and two H2A-H2B heterodimers. The octamer wraps approximately 147 bp of DNA. In terms of processing, can be acetylated to form H2BK6ac and H2BK33ac. Monoubiquitinated to form H2BK143ub1; may give a specific tag for epigenetic transcriptional activation.

Its subcellular location is the nucleus. The protein localises to the chromosome. In terms of biological role, core component of nucleosome. Nucleosomes wrap and compact DNA into chromatin, limiting DNA accessibility to the cellular machineries which require DNA as a template. Histones thereby play a central role in transcription regulation, DNA repair, DNA replication and chromosomal stability. DNA accessibility is regulated via a complex set of post-translational modifications of histones, also called histone code, and nucleosome remodeling. The chain is Histone H2B.1 from Triticum aestivum (Wheat).